The chain runs to 621 residues: tRNA uridine 5-carboxymethylaminomethyl modification enzyme MnmG (621 aa).

An FAD-binding site is contributed by 8-13; it reads GAGHAG. A disordered region spans residues 199–227; that stretch reads PRIDRRSVDYSRVEEQKGDENPPPFSFST. A compositionally biased stretch (basic and acidic residues) spans 200 to 218; that stretch reads RIDRRSVDYSRVEEQKGDE. Residue 269-283 participates in NAD(+) binding; the sequence is GPRYCPSIEDKIFRF.

The protein belongs to the MnmG family. In terms of assembly, homodimer. Heterotetramer of two MnmE and two MnmG subunits. Requires FAD as cofactor.

The protein localises to the cytoplasm. NAD-binding protein involved in the addition of a carboxymethylaminomethyl (cmnm) group at the wobble position (U34) of certain tRNAs, forming tRNA-cmnm(5)s(2)U34. The sequence is that of tRNA uridine 5-carboxymethylaminomethyl modification enzyme MnmG from Chlorobium luteolum (strain DSM 273 / BCRC 81028 / 2530) (Pelodictyon luteolum).